We begin with the raw amino-acid sequence, 281 residues long: Small ribosomal subunit protein uS2 (281 aa).

The interval 229–281 (RSGANKTEGEAAEQPMAAWEKELLTNEAPAEASAEAAAPAAAEGETAEAPKAE) is disordered. Low complexity predominate over residues 255 to 275 (EAPAEASAEAAAPAAAEGETA).

It belongs to the universal ribosomal protein uS2 family.

The sequence is that of Small ribosomal subunit protein uS2 from Bifidobacterium longum subsp. infantis (strain ATCC 15697 / DSM 20088 / JCM 1222 / NCTC 11817 / S12).